A 75-amino-acid polypeptide reads, in one-letter code: Protein RegB (75 aa).

Required for optimal exotoxin A production. This chain is Protein RegB (regB), found in Pseudomonas aeruginosa (strain ATCC 15692 / DSM 22644 / CIP 104116 / JCM 14847 / LMG 12228 / 1C / PRS 101 / PAO1).